A 268-amino-acid polypeptide reads, in one-letter code: 3-methyl-2-oxobutanoate hydroxymethyltransferase (268 aa).

Asp-44 and Asp-83 together coordinate Mg(2+). 3-methyl-2-oxobutanoate-binding positions include 44–45 (DS), Asp-83, and Lys-113. Residue Glu-115 participates in Mg(2+) binding. Catalysis depends on Glu-182, which acts as the Proton acceptor.

It belongs to the PanB family. As to quaternary structure, homodecamer; pentamer of dimers. It depends on Mg(2+) as a cofactor.

It localises to the cytoplasm. The catalysed reaction is 3-methyl-2-oxobutanoate + (6R)-5,10-methylene-5,6,7,8-tetrahydrofolate + H2O = 2-dehydropantoate + (6S)-5,6,7,8-tetrahydrofolate. It functions in the pathway cofactor biosynthesis; (R)-pantothenate biosynthesis; (R)-pantoate from 3-methyl-2-oxobutanoate: step 1/2. Functionally, catalyzes the reversible reaction in which hydroxymethyl group from 5,10-methylenetetrahydrofolate is transferred onto alpha-ketoisovalerate to form ketopantoate. The polypeptide is 3-methyl-2-oxobutanoate hydroxymethyltransferase (Synechococcus elongatus (strain ATCC 33912 / PCC 7942 / FACHB-805) (Anacystis nidulans R2)).